The primary structure comprises 703 residues: Arf-GAP with GTPase, ANK repeat and PH domain-containing protein 9 (703 aa).

3 disordered regions span residues 249-287 (KRNGGGSLNNYSSSIPPTPSTSQEDPQFSVPPTANTPTP), 299-323 (FTSEKGSDPDKERKAPENHADTIGS), and 427-449 (SSTTSPKLNPPPSPHANKKKHLK). A compositionally biased stretch (polar residues) spans 271 to 286 (QEDPQFSVPPTANTPT). Residues 303 to 318 (KGSDPDKERKAPENHA) are compositionally biased toward basic and acidic residues. Residues 327–488 (IPIKQGMLLK…WVQAIQSQIL (162 aa)) enclose the PH domain. In terms of domain architecture, Arf-GAP spans 509–629 (AMALQSIQNM…LFLAPLPCTE (121 aa)). The C4-type zinc-finger motif lies at 524-547 (CVDCETQNPKWASLNLGVLMCIEC). The ANK repeat unit spans residues 631–700 (SLGQQLLRAT…WTSWPEMPTG (70 aa)).

The protein belongs to the centaurin gamma-like family.

Putative GTPase-activating protein. The chain is Arf-GAP with GTPase, ANK repeat and PH domain-containing protein 9 (AGAP9) from Homo sapiens (Human).